The primary structure comprises 155 residues: Molybdopterin synthase catalytic subunit 1 (155 aa).

Residues 101 to 102 (HR), Lys117, and 124 to 126 (KKE) contribute to the substrate site.

Belongs to the MoaE family. MOCS2B subfamily. Heterotetramer; composed of 2 small (MOCS2A) and 2 large (MOCS2B) subunits.

The protein localises to the cytoplasm. The enzyme catalyses 2 [molybdopterin-synthase sulfur-carrier protein]-C-terminal-Gly-aminoethanethioate + cyclic pyranopterin phosphate + H2O = molybdopterin + 2 [molybdopterin-synthase sulfur-carrier protein]-C-terminal Gly-Gly + 2 H(+). It functions in the pathway cofactor biosynthesis; molybdopterin biosynthesis. Functionally, catalytic subunit of the molybdopterin synthase complex, a complex that catalyzes the conversion of precursor Z into molybdopterin. Acts by mediating the incorporation of 2 sulfur atoms from thiocarboxylated MOCS2A into precursor Z to generate a dithiolene group. This chain is Molybdopterin synthase catalytic subunit 1, found in Aedes aegypti (Yellowfever mosquito).